Here is a 331-residue protein sequence, read N- to C-terminus: Ketol-acid reductoisomerase (NADP(+)) (331 aa).

The KARI N-terminal Rossmann domain occupies 2 to 181; sequence TKVYYEDAVK…GATRAGVIET (180 aa). NADP(+) contacts are provided by residues 25 to 28, arginine 48, serine 52, and 82 to 85; these read YGSQ and DETQ. The active site involves histidine 107. Glycine 133 serves as a coordination point for NADP(+). In terms of domain architecture, KARI C-terminal knotted spans 182–327; it reads TFKEETETDL…AELREMMPFV (146 aa). 4 residues coordinate Mg(2+): aspartate 190, glutamate 194, glutamate 226, and glutamate 230. Serine 251 is a binding site for substrate.

It belongs to the ketol-acid reductoisomerase family. Requires Mg(2+) as cofactor.

It catalyses the reaction (2R)-2,3-dihydroxy-3-methylbutanoate + NADP(+) = (2S)-2-acetolactate + NADPH + H(+). It carries out the reaction (2R,3R)-2,3-dihydroxy-3-methylpentanoate + NADP(+) = (S)-2-ethyl-2-hydroxy-3-oxobutanoate + NADPH + H(+). Its pathway is amino-acid biosynthesis; L-isoleucine biosynthesis; L-isoleucine from 2-oxobutanoate: step 2/4. It participates in amino-acid biosynthesis; L-valine biosynthesis; L-valine from pyruvate: step 2/4. Involved in the biosynthesis of branched-chain amino acids (BCAA). Catalyzes an alkyl-migration followed by a ketol-acid reduction of (S)-2-acetolactate (S2AL) to yield (R)-2,3-dihydroxy-isovalerate. In the isomerase reaction, S2AL is rearranged via a Mg-dependent methyl migration to produce 3-hydroxy-3-methyl-2-ketobutyrate (HMKB). In the reductase reaction, this 2-ketoacid undergoes a metal-dependent reduction by NADPH to yield (R)-2,3-dihydroxy-isovalerate. The sequence is that of Ketol-acid reductoisomerase (NADP(+)) from Listeria monocytogenes serovar 1/2a (strain ATCC BAA-679 / EGD-e).